Reading from the N-terminus, the 504-residue chain is Biotinidase (504 aa).

The N-terminal stretch at 1 to 20 (MFSFGTVFTFALLLIPLTEA) is a signal peptide. The CN hydrolase domain occupies 30 to 309 (YEHNLILNPD…GRLLVARVPV (280 aa)). Glutamate 79 (proton acceptor) is an active-site residue. N-linked (GlcNAc...) asparagine glycosylation is found at asparagine 86 and asparagine 117. Catalysis depends on lysine 181, which acts as the Proton donor. The active-site Nucleophile is cysteine 214. 3 N-linked (GlcNAc...) asparagine glycosylation sites follow: asparagine 261, asparagine 365, and asparagine 375.

This sequence belongs to the carbon-nitrogen hydrolase superfamily. BTD/VNN family.

The protein resides in the secreted. Its subcellular location is the extracellular space. It catalyses the reaction biocytin + H2O = biotin + L-lysine. The catalysed reaction is biotin amide + H2O = biotin + NH4(+). Catalytic release of biotin from biocytin, the product of biotin-dependent carboxylases degradation. This chain is Biotinidase (btd), found in Takifugu rubripes (Japanese pufferfish).